The sequence spans 275 residues: Large ribosomal subunit protein uL2 (275 aa).

Positions 223 to 275 (VVMNPVDHPHGGGEGKSSGGRHPVSPWGMPTKGYKTRKNKGTDQYIVRRRNKK) are disordered.

Belongs to the universal ribosomal protein uL2 family. As to quaternary structure, part of the 50S ribosomal subunit. Forms a bridge to the 30S subunit in the 70S ribosome.

One of the primary rRNA binding proteins. Required for association of the 30S and 50S subunits to form the 70S ribosome, for tRNA binding and peptide bond formation. It has been suggested to have peptidyltransferase activity; this is somewhat controversial. Makes several contacts with the 16S rRNA in the 70S ribosome. The chain is Large ribosomal subunit protein uL2 from Psychromonas ingrahamii (strain DSM 17664 / CCUG 51855 / 37).